We begin with the raw amino-acid sequence, 232 residues long: Large ribosomal subunit protein uL1 (232 aa).

Belongs to the universal ribosomal protein uL1 family. As to quaternary structure, part of the 50S ribosomal subunit.

Its function is as follows. Binds directly to 23S rRNA. The L1 stalk is quite mobile in the ribosome, and is involved in E site tRNA release. In terms of biological role, protein L1 is also a translational repressor protein, it controls the translation of the L11 operon by binding to its mRNA. This Thermosipho melanesiensis (strain DSM 12029 / CIP 104789 / BI429) protein is Large ribosomal subunit protein uL1.